Here is a 304-residue protein sequence, read N- to C-terminus: Aspartate carbamoyltransferase catalytic subunit (304 aa).

Residues R49 and T50 each contribute to the carbamoyl phosphate site. Residue K77 coordinates L-aspartate. Residues R99, H127, and Q130 each coordinate carbamoyl phosphate. Residues R160 and R211 each contribute to the L-aspartate site. The carbamoyl phosphate site is built by A252 and P253.

The protein belongs to the aspartate/ornithine carbamoyltransferase superfamily. ATCase family. As to quaternary structure, heterododecamer (2C3:3R2) of six catalytic PyrB chains organized as two trimers (C3), and six regulatory PyrI chains organized as three dimers (R2).

The catalysed reaction is carbamoyl phosphate + L-aspartate = N-carbamoyl-L-aspartate + phosphate + H(+). It participates in pyrimidine metabolism; UMP biosynthesis via de novo pathway; (S)-dihydroorotate from bicarbonate: step 2/3. Its function is as follows. Catalyzes the condensation of carbamoyl phosphate and aspartate to form carbamoyl aspartate and inorganic phosphate, the committed step in the de novo pyrimidine nucleotide biosynthesis pathway. The sequence is that of Aspartate carbamoyltransferase catalytic subunit from Bacillus cereus (strain G9842).